A 216-amino-acid polypeptide reads, in one-letter code: Ras-related protein Rab-5C (216 aa).

Residues Ser-30, Ala-31, Gly-33, Lys-34, Ser-35, Ser-36, His-47, Glu-48, Thr-53, and Gly-79 each coordinate GTP. Residue Ser-35 participates in Mg(2+) binding. 2 short sequence motifs (switch) span residues 45–57 (QFHE…IGAA) and 78–94 (AGQE…YRGA). Thr-53 lines the Mg(2+) pocket. At Ser-85 the chain carries Phosphoserine. 5 residues coordinate GTP: Asn-134, Lys-135, Asp-137, Ala-165, and Lys-166. The tract at residues 185 to 216 (NEPQNAAGAPGRTRGVDLQESNPASRSQCCSN) is disordered. A compositionally biased stretch (polar residues) spans 203–216 (QESNPASRSQCCSN). 2 S-geranylgeranyl cysteine lipidation sites follow: Cys-213 and Cys-214.

Belongs to the small GTPase superfamily. Rab family. In terms of assembly, interacts with EEA1 and INCA1. Interacts with GDI1, GDI2, CHML and CHM; phosphorylation at Ser-85 disrupts this interaction. The cofactor is Mg(2+). Post-translationally, phosphorylation of Ser-85 in the switch II region by LRRK2 prevents the association of RAB regulatory proteins, including CHM, CHML and RAB GDP dissociation inhibitors GDI1 and GDI2.

The protein localises to the cell membrane. It is found in the early endosome membrane. Its subcellular location is the melanosome. It catalyses the reaction GTP + H2O = GDP + phosphate + H(+). With respect to regulation, regulated by guanine nucleotide exchange factors (GEFs) which promote the exchange of bound GDP for free GTP. Regulated by GTPase activating proteins (GAPs) which increase the GTP hydrolysis activity. Inhibited by GDP dissociation inhibitors (GDIs). Its function is as follows. The small GTPases Rab are key regulators of intracellular membrane trafficking, from the formation of transport vesicles to their fusion with membranes. Rabs cycle between an inactive GDP-bound form and an active GTP-bound form that is able to recruit to membranes different sets of downstream effectors directly responsible for vesicle formation, movement, tethering and fusion. The sequence is that of Ras-related protein Rab-5C from Mus musculus (Mouse).